We begin with the raw amino-acid sequence, 459 residues long: GTPase Der (459 aa).

EngA-type G domains are found at residues Phe3–Glu167 and Ile188–Asn363. Residues Gly9 to Ser16, Asp56 to Leu60, Asn119 to Glu122, Gly194 to Ser201, Asp241 to Leu245, and Asn306 to Asp309 each bind GTP. The KH-like domain maps to Thr364 to Ala448.

Belongs to the TRAFAC class TrmE-Era-EngA-EngB-Septin-like GTPase superfamily. EngA (Der) GTPase family. As to quaternary structure, associates with the 50S ribosomal subunit.

Its function is as follows. GTPase that plays an essential role in the late steps of ribosome biogenesis. The chain is GTPase Der from Rhodopseudomonas palustris (strain HaA2).